Consider the following 124-residue polypeptide: Small ribosomal subunit protein uS12 (124 aa).

The residue at position 89 (aspartate 89) is a 3-methylthioaspartic acid. The disordered stretch occupies residues 103–124; sequence DTAGVKDRRQGRSKYGAKRPKD. Over residues 113-124 the composition is skewed to basic residues; that stretch reads GRSKYGAKRPKD.

Belongs to the universal ribosomal protein uS12 family. As to quaternary structure, part of the 30S ribosomal subunit. Contacts proteins S8 and S17. May interact with IF1 in the 30S initiation complex.

Its function is as follows. With S4 and S5 plays an important role in translational accuracy. Functionally, interacts with and stabilizes bases of the 16S rRNA that are involved in tRNA selection in the A site and with the mRNA backbone. Located at the interface of the 30S and 50S subunits, it traverses the body of the 30S subunit contacting proteins on the other side and probably holding the rRNA structure together. The combined cluster of proteins S8, S12 and S17 appears to hold together the shoulder and platform of the 30S subunit. This Acaryochloris marina (strain MBIC 11017) protein is Small ribosomal subunit protein uS12.